The following is a 317-amino-acid chain: DNA-directed RNA polymerase subunit alpha (317 aa).

The alpha N-terminal domain (alpha-NTD) stretch occupies residues 1–234 (MKQFVRPEFI…AHLEFFIDLN (234 aa)). Positions 250 to 317 (DKELDRTVEE…ASLGLAFRQS (68 aa)) are alpha C-terminal domain (alpha-CTD).

The protein belongs to the RNA polymerase alpha chain family. As to quaternary structure, homodimer. The RNAP catalytic core consists of 2 alpha, 1 beta, 1 beta' and 1 omega subunit. When a sigma factor is associated with the core the holoenzyme is formed, which can initiate transcription.

The catalysed reaction is RNA(n) + a ribonucleoside 5'-triphosphate = RNA(n+1) + diphosphate. Its function is as follows. DNA-dependent RNA polymerase catalyzes the transcription of DNA into RNA using the four ribonucleoside triphosphates as substrates. The chain is DNA-directed RNA polymerase subunit alpha from Mycoplasma mycoides subsp. mycoides SC (strain CCUG 32753 / NCTC 10114 / PG1).